Here is a 344-residue protein sequence, read N- to C-terminus: 2-methyl-6-phytyl-1,4-hydroquinone methyltransferase, chloroplastic (344 aa).

The transit peptide at 1-62 (MACSMLNGVD…LTTVTKCTLS (62 aa)) directs the protein to the chloroplast. Residues 63–313 (ASERPASQPR…PVHPLVFLYR (251 aa)) are Chloroplast intermembrane-facing. The interval 121-130 (VVDVGGGTGF) is SAM motif I. An SAM motif II region spans residues 166–179 (CRIIEGDAEDLPFP). The segment at 207 to 220 (RVLKLGGKACLIGP) is SAM motif III. A helical transmembrane segment spans residues 314–334 (FLLGALASTYYVLVPIYMWIK). At 335-344 (DKIFPKGMPL) the chain is on the stromal side.

Belongs to the class I-like SAM-binding methyltransferase superfamily. MPBQ/MBSQ MT family.

The protein localises to the plastid. The protein resides in the chloroplast inner membrane. The enzyme catalyses 2-methyl-6-phytyl-1,4-benzene-1,4-diol + S-adenosyl-L-methionine = 2,3-dimethyl-6-phytylbenzene-1,4-diol + S-adenosyl-L-homocysteine + H(+). The catalysed reaction is 2-methyl-6-(all-trans-nonaprenyl)benzene-1,4-diol + S-adenosyl-L-methionine = plastoquinol-9 + S-adenosyl-L-homocysteine + H(+). It carries out the reaction 6-geranylgeranyl-2-methylbenzene-1,4-diol + S-adenosyl-L-methionine = 6-geranylgeranyl-2,3-dimethylbenzene-1,4-diol + S-adenosyl-L-homocysteine + H(+). It functions in the pathway cofactor biosynthesis; tocopherol biosynthesis. Its function is as follows. Involved in a key methylation step in both tocopherols (vitamin E) and plastoquinone synthesis. Catalyzes the conversion of 2-methyl-6-phytyl-1,4-hydroquinone (MPBQ) to 2,3-dimethyl-6-phytyl-1,4-hydroquinone (DMPQ, a substrate for tocopherol cyclase), and 2-methyl-6-solanyl-1,4-benzoquinone (MSBQ) to plastoquinone. This Spinacia oleracea (Spinach) protein is 2-methyl-6-phytyl-1,4-hydroquinone methyltransferase, chloroplastic.